Reading from the N-terminus, the 117-residue chain is Neurotoxic enhancer CSTX-13 (117 aa).

The signal sequence occupies residues 1–20 (MKVLVIFAVLSLVIFSNCSA). The propeptide occupies 21-47 (ETDEDFFGEESFEADDIIPFIAKEQVR). Intrachain disulfides connect Cys50-Cys65, Cys57-Cys74, Cys64-Cys95, and Cys76-Cys93. Positions 82–87 (RSETAR) are excised as a propeptide. Thr116 carries the post-translational modification Threonine amide.

The protein belongs to the neurotoxin 19 (CSTX) family. 12 subfamily. In terms of assembly, heterodimer of A and B chains; disulfide-linked. Interacts with CSTX-1 (AC P81694) (Kd=430 nM), and with CSTX-9 (AC P58604) (Kd=370 nM). In terms of tissue distribution, expressed by the venom gland.

The protein resides in the secreted. It is found in the target cell membrane. Functionally, synergistic toxin that induces or increases a cytolytic effect when combined with CSTX-1 (AC P81694) or CSTX-9 (AC P58604). When alone, has a weak insecticidal activity, with an unknown molecular target. The sequence is that of Neurotoxic enhancer CSTX-13 from Cupiennius salei (American wandering spider).